A 147-amino-acid polypeptide reads, in one-letter code: HTH-type transcriptional regulator MgrA (147 aa).

The 132-residue stretch at 8 to 139 (KEQLCFSLYN…LNRLLGKVIH (132 aa)) folds into the HTH marR-type domain. Positions 55 to 78 (VKKVVTELALDTGTVSPLLKRMEQ) form a DNA-binding region, H-T-H motif.

It is found in the cytoplasm. Its function is as follows. Regulatory protein involved in autolytic activity, multidrug resistance and virulence. Controls autolysis by inactivating LytM, LytN (autolysins) and SarV (autolysis activator) and activating ArlRS, LrgAB and LytSR (autolysis inhibitors). Acts as a dual regulator for resistance to multiple drugs by inactivating NorB and tet38 and activating NorA. Positively controls the expression of virulence accessory gene regulator (agr) to promote alpha-hemolysin (hla) transcription and down-regulates staphylococcal accessory regulator (sarS), leading to repression of surface protein A (spa). Binds directly to hla promoter to augment its activation. Binds to sarS promoter to down-regulate spa expression. The chain is HTH-type transcriptional regulator MgrA (mgrA) from Staphylococcus aureus (strain NCTC 8325 / PS 47).